A 479-amino-acid polypeptide reads, in one-letter code: Anaerobic nitric oxide reductase flavorubredoxin (479 aa).

Residues 30–210 (LRGSSYNSYL…PFSRLVTPKI (181 aa)) are zinc metallo-hydrolase. Fe cation is bound by residues His-79, Glu-81, Asp-83, His-147, Asp-166, and His-227. Positions 254–393 (ITIFYDTMSN…LCREHGREIA (140 aa)) constitute a Flavodoxin-like domain. FMN contacts are provided by residues 260 to 264 (TMSNN) and 342 to 369 (AFGS…EMSL). Residues 423–474 (GPRMQCSVCQWIYDPAKGEPMQDVAPGTPWSEVPDNFLCPECSLGKDVFDEL) form the Rubredoxin-like domain. Fe cation contacts are provided by Cys-428, Cys-431, Cys-461, and Cys-464.

The protein in the N-terminal section; belongs to the zinc metallo-hydrolase group 3 family. As to quaternary structure, homotetramer. Fe cation is required as a cofactor. FMN serves as cofactor.

The protein resides in the cytoplasm. The protein operates within nitrogen metabolism; nitric oxide reduction. Its function is as follows. Anaerobic nitric oxide reductase; uses NADH to detoxify nitric oxide (NO), protecting several 4Fe-4S NO-sensitive enzymes. Has at least 2 reductase partners, only one of which (NorW, flavorubredoxin reductase) has been identified. NO probably binds to the di-iron center; electrons enter from the NorW at rubredoxin and are transferred sequentially to the FMN center and the di-iron center. Also able to function as an aerobic oxygen reductase. This chain is Anaerobic nitric oxide reductase flavorubredoxin, found in Shigella flexneri serotype 5b (strain 8401).